The following is a 218-amino-acid chain: Adenylate kinase (218 aa).

Residue 10 to 15 (GAGKGT) coordinates ATP. An NMP region spans residues 30–59 (STGDMLRAAVKAGTPLGLEAKKVMDAGGLV). AMP contacts are provided by residues threonine 31, arginine 36, 57-59 (GLV), 85-88 (GFPR), and glutamine 92. Residues 122–159 (GRRVHPASGRSYHVRFNPPKAEGVDDVTGEPLVQRDDD) are LID. ATP contacts are provided by residues arginine 123 and 132-133 (SY). AMP contacts are provided by arginine 156 and arginine 167. An ATP-binding site is contributed by glycine 203.

It belongs to the adenylate kinase family. In terms of assembly, monomer.

It is found in the cytoplasm. The enzyme catalyses AMP + ATP = 2 ADP. Its pathway is purine metabolism; AMP biosynthesis via salvage pathway; AMP from ADP: step 1/1. Functionally, catalyzes the reversible transfer of the terminal phosphate group between ATP and AMP. Plays an important role in cellular energy homeostasis and in adenine nucleotide metabolism. The chain is Adenylate kinase from Bordetella bronchiseptica (strain ATCC BAA-588 / NCTC 13252 / RB50) (Alcaligenes bronchisepticus).